Here is a 186-residue protein sequence, read N- to C-terminus: Crossover junction endodeoxyribonuclease RuvC (186 aa).

Active-site residues include D14, E73, and D145. Residues D14, E73, and D145 each coordinate Mg(2+). The disordered stretch occupies residues 162-186; it reads GRSLPPSRGRRRSGSRQRWRDYRPS. Basic residues predominate over residues 169–178; that stretch reads RGRRRSGSRQ.

The protein belongs to the RuvC family. In terms of assembly, homodimer which binds Holliday junction (HJ) DNA. The HJ becomes 2-fold symmetrical on binding to RuvC with unstacked arms; it has a different conformation from HJ DNA in complex with RuvA. In the full resolvosome a probable DNA-RuvA(4)-RuvB(12)-RuvC(2) complex forms which resolves the HJ. The cofactor is Mg(2+).

The protein localises to the cytoplasm. It catalyses the reaction Endonucleolytic cleavage at a junction such as a reciprocal single-stranded crossover between two homologous DNA duplexes (Holliday junction).. Functionally, the RuvA-RuvB-RuvC complex processes Holliday junction (HJ) DNA during genetic recombination and DNA repair. Endonuclease that resolves HJ intermediates. Cleaves cruciform DNA by making single-stranded nicks across the HJ at symmetrical positions within the homologous arms, yielding a 5'-phosphate and a 3'-hydroxyl group; requires a central core of homology in the junction. The consensus cleavage sequence is 5'-(A/T)TT(C/G)-3'. Cleavage occurs on the 3'-side of the TT dinucleotide at the point of strand exchange. HJ branch migration catalyzed by RuvA-RuvB allows RuvC to scan DNA until it finds its consensus sequence, where it cleaves and resolves the cruciform DNA. This is Crossover junction endodeoxyribonuclease RuvC from Chromohalobacter salexigens (strain ATCC BAA-138 / DSM 3043 / CIP 106854 / NCIMB 13768 / 1H11).